A 405-amino-acid chain; its full sequence is MSQQTPQESEQTTAKEQDLDQESVLSNIDFNTDLNHNLNLSEYCISSDAGTEKMDSDEEKSLANLPELKYAPKLSSLVKQETLTESLKRPHEDEKEAIDEAKKMKVPGENEDESKEEEKSQELEEAIDSKEKSTDARDEQGDEGDNEEENNEEDNENENEHTAPPALVMPSPIEMEEQRMTALKEITDIEYKFAQLRQKLYDNQLVRLQTELQMCLEGSHPELQVYYSKIAAIRDYKLHRAYQRQKYELSCINTETIATRTFIHQDFHKKVTDLRARLLNRTTQTWYDINKERRDMDIVIPDVNYHVPIKLDNKTLSCITGYASAAQLCYPGEPVAEDLACESIEYRYRANPVDKLEVIVDRMRLNNEISDLEGLRKYFHSFPGAPELNPLRDSEINDDFHQWAQ.

Residues M1–T12 show a composition bias toward low complexity. Disordered stretches follow at residues M1 to S26 and A49 to S171. S56 carries the phosphoserine modification. Composition is skewed to basic and acidic residues over residues S86–G108 and E116–E139. A Phosphoserine modification is found at S120. The segment covering Q140–N157 has biased composition (acidic residues). The residue at position 370 (S370) is a Phosphoserine.

In terms of assembly, component of the RPD3C(L) complex composed of at least ASH1, CTI6, DEP1, PHO23, RPD3, RXT2, RXT3, SAP30, SDS3, SIN3, UME1 and UME6.

Its subcellular location is the cytoplasm. The protein resides in the nucleus. Functionally, component of the RPD3C(L) histone deacetylase complex (HDAC) responsible for the deacetylation of lysine residues on the N-terminal part of the core histones (H2A, H2B, H3 and H4). Histone deacetylation gives a tag for epigenetic repression and plays an important role in transcriptional regulation, cell cycle progression and developmental events. This Saccharomyces cerevisiae (strain ATCC 204508 / S288c) (Baker's yeast) protein is Transcriptional regulatory protein DEP1 (DEP1).